A 367-amino-acid polypeptide reads, in one-letter code: Leu/Ile/Val-binding protein (367 aa).

Residues 1 to 23 (MNMKGKALLAGCIALSLSNMAFA) form the signal peptide. A disulfide bridge connects residues Cys76 and Cys101.

It belongs to the leucine-binding protein family.

Its subcellular location is the periplasm. This protein is a component of the leucine, isoleucine, valine, (threonine) transport system, which is one of the two periplasmic binding protein-dependent transport systems of the high-affinity transport of the branched-chain amino acids. This is Leu/Ile/Val-binding protein (livJ) from Citrobacter freundii.